We begin with the raw amino-acid sequence, 165 residues long: MIMGIDPGTLVSGYAIILVEQRYKIRAHSYGAIRLSSKDSLTQRYKQLFQTLSGVLDNVTPDAVVLETQYVHKNPQSAIKLGMGRGVLVLAAALRDIPVFEYTPNVAKRAVVGKGNASKQQVQLMVSKILNIPDVLNSDCEDIADAFALAICHAHTSAYTCLGVR.

Residues Asp-6, Glu-67, and Asp-142 contribute to the active site. 3 residues coordinate Mg(2+): Asp-6, Glu-67, and Asp-142.

This sequence belongs to the RuvC family. In terms of assembly, homodimer which binds Holliday junction (HJ) DNA. The HJ becomes 2-fold symmetrical on binding to RuvC with unstacked arms; it has a different conformation from HJ DNA in complex with RuvA. In the full resolvosome a probable DNA-RuvA(4)-RuvB(12)-RuvC(2) complex forms which resolves the HJ. The cofactor is Mg(2+).

It is found in the cytoplasm. It catalyses the reaction Endonucleolytic cleavage at a junction such as a reciprocal single-stranded crossover between two homologous DNA duplexes (Holliday junction).. Its function is as follows. The RuvA-RuvB-RuvC complex processes Holliday junction (HJ) DNA during genetic recombination and DNA repair. Endonuclease that resolves HJ intermediates. Cleaves cruciform DNA by making single-stranded nicks across the HJ at symmetrical positions within the homologous arms, yielding a 5'-phosphate and a 3'-hydroxyl group; requires a central core of homology in the junction. The consensus cleavage sequence is 5'-(A/T)TT(C/G)-3'. Cleavage occurs on the 3'-side of the TT dinucleotide at the point of strand exchange. HJ branch migration catalyzed by RuvA-RuvB allows RuvC to scan DNA until it finds its consensus sequence, where it cleaves and resolves the cruciform DNA. In Chlamydia abortus (strain DSM 27085 / S26/3) (Chlamydophila abortus), this protein is Crossover junction endodeoxyribonuclease RuvC.